A 263-amino-acid chain; its full sequence is Outer membrane lipoprotein 3 (263 aa).

Positions 1–19 (MKIMKLAGAVAIFSLFLTA) are cleaved as a signal peptide. Residue cysteine 20 is the site of N-palmitoyl cysteine attachment. The S-diacylglycerol cysteine moiety is linked to residue cysteine 20.

This sequence belongs to the NlpA lipoprotein family.

It localises to the cell outer membrane. This chain is Outer membrane lipoprotein 3 (plpC), found in Mannheimia haemolytica (Pasteurella haemolytica).